An 83-amino-acid chain; its full sequence is Mu-theraphotoxin-Hhn2l (83 aa).

The signal sequence occupies residues Met1–Ala21. Positions Ser22–Arg48 are excised as a propeptide. 3 disulfides stabilise this stretch: Cys50–Cys65, Cys57–Cys70, and Cys64–Cys77. Leu81 carries the leucine amide modification.

The protein belongs to the neurotoxin 10 (Hwtx-1) family. 15 (Hntx-3) subfamily. In terms of assembly, monomer. In terms of tissue distribution, expressed by the venom gland.

It localises to the secreted. Its function is as follows. Lethal neurotoxin. Selectively blocks tetrodotoxin-sensitive voltage-gated sodium channels (Nav). Does not affect tetrodotoxin-resistant voltage-gated sodium channels or calcium channels. The sequence is that of Mu-theraphotoxin-Hhn2l from Cyriopagopus hainanus (Chinese bird spider).